The chain runs to 468 residues: COBRA-like protein 5 (468 aa).

An N-terminal signal peptide occupies residues 1–22; sequence MELHRCSLLALLLAVTCSVAVA. Asn-31, Asn-156, Asn-164, and Asn-228 each carry an N-linked (GlcNAc...) asparagine glycan. Positions 251–278 are disordered; sequence GGGKNARAGDGRSRRNSGGGGGHSGGTE. N-linked (GlcNAc...) asparagine glycosylation is found at Asn-340, Asn-355, and Asn-374. Asn-443 carries the GPI-anchor amidated asparagine lipid modification. Residues 444–468 constitute a propeptide, removed in mature form; the sequence is SAPIGPPRSVAAAASAILVVLLLVA.

This sequence belongs to the COBRA family. Expressed mainly in developing sclerenchyma cells and in vascular bundles.

It is found in the cell membrane. In terms of biological role, involved in determining the orientation of cell expansion, probably by playing an important role in cellulose deposition. May act by recruiting cellulose synthesizing complexes to discrete positions on the cell surface. The protein is COBRA-like protein 5 (BC1) of Oryza sativa subsp. indica (Rice).